We begin with the raw amino-acid sequence, 375 residues long: Trichodiene synthase (375 aa).

It belongs to the trichodiene synthase family.

It carries out the reaction (2E,6E)-farnesyl diphosphate = trichodiene + diphosphate. It participates in sesquiterpene biosynthesis; trichothecene biosynthesis. Its function is as follows. TS is a member of the terpene cyclase group of enzymes. It catalyzes the isomerization and cyclization of farnesyl pyro-phosphate to form trichodiene, the first cyclic intermediate in the biosynthetic pathway for trichothecenes. It serves to branch trichothecene biosynthesis from the isoprenoid pathway. This is Trichodiene synthase (TRI5) from Fusarium cortaderiae.